The chain runs to 231 residues: Lipoprotein-releasing system ATP-binding protein LolD (231 aa).

An ABC transporter domain is found at 11 to 231 (LQAEHLGKVY…HMENGRLQPD (221 aa)). 47 to 54 (GASGSGKS) is a binding site for ATP.

It belongs to the ABC transporter superfamily. Lipoprotein translocase (TC 3.A.1.125) family. In terms of assembly, the complex is composed of two ATP-binding proteins (LolD) and two transmembrane proteins (LolC and LolE).

Its subcellular location is the cell inner membrane. Part of the ABC transporter complex LolCDE involved in the translocation of mature outer membrane-directed lipoproteins, from the inner membrane to the periplasmic chaperone, LolA. Responsible for the formation of the LolA-lipoprotein complex in an ATP-dependent manner. This is Lipoprotein-releasing system ATP-binding protein LolD from Bordetella bronchiseptica (strain ATCC BAA-588 / NCTC 13252 / RB50) (Alcaligenes bronchisepticus).